Here is a 123-residue protein sequence, read N- to C-terminus: uncharacterized protein (123 aa).

Residues 100-123 (NKQPKTTHHFSTNSSEYKSRKSKH) are disordered.

This is an uncharacterized protein from Acanthamoeba polyphaga mimivirus (APMV).